The sequence spans 897 residues: Protein transport protein SEC24-1 (897 aa).

The Zn(2+) site is built by C213, C216, C235, and C238. Positions C213–C238 are zinc finger-like.

It belongs to the SEC23/SEC24 family. SEC24 subfamily. The COPII coat is composed of at least 5 proteins: the SEC23/24 complex, the SEC13/31 complex, and the protein SAR1. Golgi apparatus membrane; Peripheral membrane protein; Cytoplasmic side.

The protein localises to the cytoplasm. The protein resides in the cytoplasmic vesicle. It is found in the COPII-coated vesicle membrane. Its subcellular location is the endoplasmic reticulum membrane. It localises to the golgi apparatus membrane. Component of the coat protein complex II (COPII) which promotes the formation of transport vesicles from the endoplasmic reticulum (ER). The coat has two main functions, the physical deformation of the endoplasmic reticulum membrane into vesicles and the selection of cargo molecules. This chain is Protein transport protein SEC24-1 (SEC241), found in Candida glabrata (strain ATCC 2001 / BCRC 20586 / JCM 3761 / NBRC 0622 / NRRL Y-65 / CBS 138) (Yeast).